Consider the following 347-residue polypeptide: Ileal sodium/bile acid cotransporter (347 aa).

Residues 1–29 (MSNLTVGCLANATVCEGASCVAPESNFNA) are Extracellular-facing. Residues Asn3 and Asn11 are each glycosylated (N-linked (GlcNAc...) asparagine). The helical transmembrane segment at 30–50 (ILSVVLSTVLTILLALVMFSM) threads the bilayer. Topologically, residues 51–83 (GCNVEIKKFLGHIRRPWGIFIGFLCQFGIMPLT) are cytoplasmic. Residues 84 to 104 (GFVLAVAFGIMPIQAVVVLIM) form a helical membrane-spanning segment. The Extracellular segment spans residues 105-127 (GCCPGGTASNILAYWVDGDMDLS). The chain crosses the membrane as a helical span at residues 128–148 (VSMTTCSTLLALGMMPLCLYV). Residues 149–158 (YTKMWVDSGT) lie on the Cytoplasmic side of the membrane. Residues 159-179 (IVIPYDNIGTSLVALVVPVSI) form a helical membrane-spanning segment. The Extracellular portion of the chain corresponds to 180–196 (GMFVNHKWPQKAKIILK). Residues 197–217 (VGSIAGAVLIVLIAVVGGILY) traverse the membrane as a helical segment. The Cytoplasmic segment spans residues 218–225 (QSAWIIEP). A helical membrane pass occupies residues 226–246 (KLWIIGTIFPMAGYSLGFFLA). Residues 247-289 (RIAGQPWYRCRTVALETGMQNTQLCSTIVQLSFSPEDLTYVFT) are Extracellular-facing. Residues 290 to 310 (FPLIYSIFQIAFAAIFLGIYV) traverse the membrane as a helical segment. At 311-347 (AYRKCHGKNDAEFPDIKDTKTEPESSFHQMNGGFQPE) the chain is on the cytoplasmic side. The span at 323–335 (FPDIKDTKTEPES) shows a compositional bias: basic and acidic residues. The segment at 323-347 (FPDIKDTKTEPESSFHQMNGGFQPE) is disordered. Residue Ser336 is modified to Phosphoserine.

Belongs to the bile acid:sodium symporter (BASS) (TC 2.A.28) family. As to quaternary structure, monomer and homodimer.

It is found in the membrane. The enzyme catalyses taurocholate(out) + 2 Na(+)(out) = taurocholate(in) + 2 Na(+)(in). It carries out the reaction cholate(out) + 2 Na(+)(out) = cholate(in) + 2 Na(+)(in). It catalyses the reaction taurochenodeoxycholate(out) + 2 Na(+)(out) = taurochenodeoxycholate(in) + 2 Na(+)(in). The catalysed reaction is tauroursodeoxycholate(out) + 2 Na(+)(out) = tauroursodeoxycholate(in) + 2 Na(+)(in). The enzyme catalyses glycocholate(out) + 2 Na(+)(out) = glycocholate(in) + 2 Na(+)(in). It carries out the reaction tauronorcholate(out) + 2 Na(+)(out) = tauronorcholate(in) + 2 Na(+)(in). It catalyses the reaction tauroallocholate(out) + 2 Na(+)(out) = tauroallocholate(in) + 2 Na(+)(in). The catalysed reaction is taurodeoxycholate(out) + 2 Na(+)(out) = taurodeoxycholate(in) + 2 Na(+)(in). The enzyme catalyses tauro-beta-muricholate(out) + 2 Na(+)(out) = tauro-beta-muricholate(in) + 2 Na(+)(in). Its function is as follows. Plays a critical role in the sodium-dependent reabsorption of bile acids from the lumen of the small intestine. Transports various bile acids, unconjugated or conjugated, such as cholate and taurocholate. Also responsible for bile acid transport in the renal proximal tubules, a salvage mechanism that helps conserve bile acids. Works collaboratively with the Na(+)-taurocholate cotransporting polypeptide (NTCP), the organic solute transporter (OST), and the bile salt export pump (BSEP), to ensure efficacious biological recycling of bile acids during enterohepatic circulation. This Oryctolagus cuniculus (Rabbit) protein is Ileal sodium/bile acid cotransporter (SLC10A2).